The primary structure comprises 512 residues: Bifunctional purine biosynthesis protein PurH (512 aa).

An MGS-like domain is found at 1 to 146; sequence MTIKRALISV…KNHQDVTVIV (146 aa).

The protein belongs to the PurH family.

It catalyses the reaction (6R)-10-formyltetrahydrofolate + 5-amino-1-(5-phospho-beta-D-ribosyl)imidazole-4-carboxamide = 5-formamido-1-(5-phospho-D-ribosyl)imidazole-4-carboxamide + (6S)-5,6,7,8-tetrahydrofolate. It carries out the reaction IMP + H2O = 5-formamido-1-(5-phospho-D-ribosyl)imidazole-4-carboxamide. It participates in purine metabolism; IMP biosynthesis via de novo pathway; 5-formamido-1-(5-phospho-D-ribosyl)imidazole-4-carboxamide from 5-amino-1-(5-phospho-D-ribosyl)imidazole-4-carboxamide (10-formyl THF route): step 1/1. Its pathway is purine metabolism; IMP biosynthesis via de novo pathway; IMP from 5-formamido-1-(5-phospho-D-ribosyl)imidazole-4-carboxamide: step 1/1. The polypeptide is Bifunctional purine biosynthesis protein PurH (Bacillus subtilis (strain 168)).